The chain runs to 279 residues: Putative pyruvate, phosphate dikinase regulatory protein (279 aa).

157-164 (GVSRTSKT) serves as a coordination point for ADP.

The protein belongs to the pyruvate, phosphate/water dikinase regulatory protein family. PDRP subfamily.

The catalysed reaction is N(tele)-phospho-L-histidyl/L-threonyl-[pyruvate, phosphate dikinase] + ADP = N(tele)-phospho-L-histidyl/O-phospho-L-threonyl-[pyruvate, phosphate dikinase] + AMP + H(+). It catalyses the reaction N(tele)-phospho-L-histidyl/O-phospho-L-threonyl-[pyruvate, phosphate dikinase] + phosphate + H(+) = N(tele)-phospho-L-histidyl/L-threonyl-[pyruvate, phosphate dikinase] + diphosphate. In terms of biological role, bifunctional serine/threonine kinase and phosphorylase involved in the regulation of the pyruvate, phosphate dikinase (PPDK) by catalyzing its phosphorylation/dephosphorylation. In Lactobacillus helveticus (strain DPC 4571), this protein is Putative pyruvate, phosphate dikinase regulatory protein.